The chain runs to 99 residues: Acylphosphatase (99 aa).

The region spanning 5–97 (IRQVMVRGRV…YAGERFSILS (93 aa)) is the Acylphosphatase-like domain. Residues Arg-20 and Asn-38 contribute to the active site.

This sequence belongs to the acylphosphatase family.

The catalysed reaction is an acyl phosphate + H2O = a carboxylate + phosphate + H(+). This chain is Acylphosphatase (acyP), found in Rhodopseudomonas palustris (strain BisB5).